A 120-amino-acid polypeptide reads, in one-letter code: MALKIRLSRGGSKKRPYYHIVVADARSPRDGRFLERVGAWDPMLPKDKPRVKLNEDRIQHWLNQGAQPTDRVLRFLDAAGLKKRPARNNPHKGEPGKKAQERIAAAKQAAEDAKAAEASA.

Positions 80-120 (GLKKRPARNNPHKGEPGKKAQERIAAAKQAAEDAKAAEASA) are disordered. Basic residues predominate over residues 81–90 (LKKRPARNNP). Composition is skewed to basic and acidic residues over residues 91 to 101 (HKGEPGKKAQE) and 109 to 120 (AAEDAKAAEASA).

It belongs to the bacterial ribosomal protein bS16 family.

In Bartonella bacilliformis (strain ATCC 35685 / KC583 / Herrer 020/F12,63), this protein is Small ribosomal subunit protein bS16.